The sequence spans 453 residues: MTENEQLFWNRVLELSRSQIAPAAYEFFVLEARLLKIEHQTAVITLDNIEMKKLFWEQNLGPVILTAGFEIFNAEITANYVSNDLHLQETSFSNYQQSSNEVNTLPIRKIDSNLKEKYTFANFVQGDENRWAVSASIAVADSPGTTYNPLFIWGGPGLGKTHLLNAIGNQVLRDNPNARVLYITAENFINEFVSHIRLDSMEELKEKFRNLDLLLIDDIQSLAKKTLGGTQEEFFNTFNALHTNDKQIVLTSDRNPNQLNDLEERLVTRFSWGLPVNITPPDFETRVAILTNKIQEYPYDFPQDTIEYLAGEFDSNVRELEGALKNISLVADFKHAKTITVDIAAEAIRARKNDGPIVTVIPIEEIQIQVGKFYGVTVKEIKATKRTQDIVLARQVAMYLAREMTDNSLPKIGKEFGGRDHSTVLHAYNKIKNMVAQDDNLRIEIETIKNKIR.

The domain I, interacts with DnaA modulators stretch occupies residues 1-78; that stretch reads MTENEQLFWN…FEIFNAEITA (78 aa). Positions 78–112 are domain II; the sequence is ANYVSNDLHLQETSFSNYQQSSNEVNTLPIRKIDS. Residues 113–331 form a domain III, AAA+ region region; it reads NLKEKYTFAN…GALKNISLVA (219 aa). Residues Gly157, Gly159, Lys160, and Thr161 each contribute to the ATP site. A domain IV, binds dsDNA region spans residues 332–453; that stretch reads DFKHAKTITV…EIETIKNKIR (122 aa).

The protein belongs to the DnaA family. Oligomerizes as a right-handed, spiral filament on DNA at oriC.

The protein localises to the cytoplasm. Plays an essential role in the initiation and regulation of chromosomal replication. ATP-DnaA binds to the origin of replication (oriC) to initiate formation of the DNA replication initiation complex once per cell cycle. Binds the DnaA box (a 9 base pair repeat at the origin) and separates the double-stranded (ds)DNA. Forms a right-handed helical filament on oriC DNA; dsDNA binds to the exterior of the filament while single-stranded (ss)DNA is stabiized in the filament's interior. The ATP-DnaA-oriC complex binds and stabilizes one strand of the AT-rich DNA unwinding element (DUE), permitting loading of DNA polymerase. After initiation quickly degrades to an ADP-DnaA complex that is not apt for DNA replication. Binds acidic phospholipids. In Streptococcus agalactiae serotype Ia (strain ATCC 27591 / A909 / CDC SS700), this protein is Chromosomal replication initiator protein DnaA.